We begin with the raw amino-acid sequence, 415 residues long: Gamma-glutamyl phosphate reductase (415 aa).

This sequence belongs to the gamma-glutamyl phosphate reductase family.

The protein resides in the cytoplasm. It carries out the reaction L-glutamate 5-semialdehyde + phosphate + NADP(+) = L-glutamyl 5-phosphate + NADPH + H(+). It functions in the pathway amino-acid biosynthesis; L-proline biosynthesis; L-glutamate 5-semialdehyde from L-glutamate: step 2/2. In terms of biological role, catalyzes the NADPH-dependent reduction of L-glutamate 5-phosphate into L-glutamate 5-semialdehyde and phosphate. The product spontaneously undergoes cyclization to form 1-pyrroline-5-carboxylate. This Listeria monocytogenes serovar 1/2a (strain ATCC BAA-679 / EGD-e) protein is Gamma-glutamyl phosphate reductase.